The primary structure comprises 320 residues: o-succinylbenzoate synthase (320 aa).

The active-site Proton donor is the lysine 133. Residues aspartate 161, glutamate 190, and aspartate 213 each contribute to the Mg(2+) site. Catalysis depends on lysine 235, which acts as the Proton acceptor.

This sequence belongs to the mandelate racemase/muconate lactonizing enzyme family. MenC type 1 subfamily. Requires a divalent metal cation as cofactor.

The catalysed reaction is (1R,6R)-6-hydroxy-2-succinyl-cyclohexa-2,4-diene-1-carboxylate = 2-succinylbenzoate + H2O. The protein operates within quinol/quinone metabolism; 1,4-dihydroxy-2-naphthoate biosynthesis; 1,4-dihydroxy-2-naphthoate from chorismate: step 4/7. It participates in quinol/quinone metabolism; menaquinone biosynthesis. Its function is as follows. Converts 2-succinyl-6-hydroxy-2,4-cyclohexadiene-1-carboxylate (SHCHC) to 2-succinylbenzoate (OSB). In Escherichia fergusonii (strain ATCC 35469 / DSM 13698 / CCUG 18766 / IAM 14443 / JCM 21226 / LMG 7866 / NBRC 102419 / NCTC 12128 / CDC 0568-73), this protein is o-succinylbenzoate synthase.